Consider the following 859-residue polypeptide: Suppressor protein MPT5 (859 aa).

Residues 85–108 form a disordered region; it reads MNNTSTSNSANSFSPNPNAASNST. Residues 86 to 108 are compositionally biased toward low complexity; it reads NNTSTSNSANSFSPNPNAASNST. Positions 188–596 constitute a PUM-HD domain; the sequence is DNSSFGLSSS…KIKLKVKAYA (409 aa). Pumilio repeat units follow at residues 209–247, 248–283, 284–320, 325–362, 363–400, 401–438, 439–474, and 503–539; these read PLRD…LMYE, QIKP…LLIQ, TIYP…LIIK, EFTS…FIID, AIVE…KISV, KIVQ…ELFN, RLSN…FIVN, and DIFT…AYNK. Residues 620–658 are disordered; that stretch reads TINNENKNPHNKNSHNHNHNHNHNHAHNNNNNNNQKSHT. Residues 628 to 645 show a composition bias toward basic residues; it reads PHNKNSHNHNHNHNHNHA. 3 positions are modified to phosphoserine: Ser-662, Ser-834, and Ser-838.

The protein resides in the cytoplasm. RNA-binding protein involved in post-transcriptional regulation. Negatively regulates expression of HO by binding to the 3'-UTR of HO mRNA. Predominantly binds to mRNAs encoding chromatin modifiers and spindle pole body components. Recognizes and binds to 5'-TGTAA[CT]A[AT]TA-3' in the 3'-UTR of target mRNAs. Multicopy suppressor of POP2 mutation. Required for high temperature growth. The polypeptide is Suppressor protein MPT5 (MPT5) (Saccharomyces cerevisiae (strain ATCC 204508 / S288c) (Baker's yeast)).